The primary structure comprises 124 residues: Large ribosomal subunit protein mL52 (124 aa).

A mitochondrion-targeting transit peptide spans 1–23; that stretch reads MAALGMLLSTGVRRLHCGSAARA. The tract at residues 99-124 is disordered; that stretch reads LQEEKRKQQNALKPKGVLLQNPGPSQ.

It belongs to the mitochondrion-specific ribosomal protein mL52 family. Component of the mitochondrial ribosome large subunit (39S) which comprises a 16S rRNA and about 50 distinct proteins.

It localises to the mitochondrion. The polypeptide is Large ribosomal subunit protein mL52 (MRPL52) (Bos taurus (Bovine)).